The primary structure comprises 87 residues: Defensin-A (87 aa).

The signal sequence occupies residues 1–19 (MKFYLVLAFLTLCAVAVTA). The propeptide occupies 20-44 (LPAGDETRIDLETLEEDLRLVDGAQ). Cystine bridges form between C57-C78, C64-C83, and C68-C85.

In terms of tissue distribution, hemolymph and fat body.

It localises to the secreted. Its function is as follows. Antibacterial peptide mostly active against Gram-positive and Gram negative bacteria. The polypeptide is Defensin-A (Glossina morsitans morsitans (Savannah tsetse fly)).